The primary structure comprises 82 residues: ATP synthase subunit c, chloroplastic (82 aa).

2 helical membrane-spanning segments follow: residues Ile-4–Pro-24 and Leu-57–Ala-77.

The protein belongs to the ATPase C chain family. As to quaternary structure, F-type ATPases have 2 components, F(1) - the catalytic core - and F(0) - the membrane proton channel. F(1) has five subunits: alpha(3), beta(3), gamma(1), delta(1), epsilon(1). F(0) has four main subunits: a(1), b(1), b'(1) and c(10-14). The alpha and beta chains form an alternating ring which encloses part of the gamma chain. F(1) is attached to F(0) by a central stalk formed by the gamma and epsilon chains, while a peripheral stalk is formed by the delta, b and b' chains.

The protein resides in the plastid. It localises to the chloroplast thylakoid membrane. Its function is as follows. F(1)F(0) ATP synthase produces ATP from ADP in the presence of a proton or sodium gradient. F-type ATPases consist of two structural domains, F(1) containing the extramembraneous catalytic core and F(0) containing the membrane proton channel, linked together by a central stalk and a peripheral stalk. During catalysis, ATP synthesis in the catalytic domain of F(1) is coupled via a rotary mechanism of the central stalk subunits to proton translocation. In terms of biological role, key component of the F(0) channel; it plays a direct role in translocation across the membrane. A homomeric c-ring of between 10-14 subunits forms the central stalk rotor element with the F(1) delta and epsilon subunits. The sequence is that of ATP synthase subunit c, chloroplastic from Trieres chinensis (Marine centric diatom).